A 589-amino-acid polypeptide reads, in one-letter code: Serine/threonine-protein kinase PknJ (589 aa).

Topologically, residues 1-342 are cytoplasmic; that stretch reads MAHELSAGSV…LPRRPRRYRR (342 aa). The 263-residue stretch at 14-276 folds into the Protein kinase domain; it reads YRIERMLGAG…SAGEFAHAAA (263 aa). ATP is bound by residues 20–28 and K43; that span reads LGAGGMGTV. Catalysis depends on D136, which acts as the Proton acceptor. Residues 343–363 traverse the membrane as a helical segment; sequence GVAAVAAVMVVAAAAVTAVTM. The Extracellular segment spans residues 364–589; the sequence is TSHQPRTATP…TNYILAKIPG (226 aa). Residues 365–387 are compositionally biased toward low complexity; that stretch reads SHQPRTATPPSAAALSPTSSSTT. Residues 365–400 are disordered; it reads SHQPRTATPPSAAALSPTSSSTTPPQPPIVTRSRLP.

It belongs to the protein kinase superfamily. Ser/Thr protein kinase family. Homodimer.

The protein resides in the cell membrane. It catalyses the reaction L-seryl-[protein] + ATP = O-phospho-L-seryl-[protein] + ADP + H(+). It carries out the reaction L-threonyl-[protein] + ATP = O-phospho-L-threonyl-[protein] + ADP + H(+). In Mycobacterium bovis (strain ATCC BAA-935 / AF2122/97), this protein is Serine/threonine-protein kinase PknJ (pknJ).